A 385-amino-acid chain; its full sequence is MAAVVAATALKGRGARNARVLRGILSGATANKASQNRTRALQSHSSPECKEEPEPLSPELEYIPRKRGKNPMKAVGLAWYSLYTRTWLGYLFYRQQLRRARNRYPKGHSKTQPRLFNGVKVLPIPVLSDNYSYLIIDTQAGLAVAVDPSDPRAVQASIEKERVNLVAILCTHKHWDHSGGNRDLSRRHRDCRVYGSPQDGIPYLTHPLCHQDVVSVGRLQIRALATPGHTQGHLVYLLDGEPYKGPSCLFSGDLLFLSGCGRTFEGTAETMLSSLDTVLDLGDDTLLWPGHEYAEENLGFAGVVEPENLARERKMQWVQRQRMERKSTCPSTLGEERAYNPFLRTHCLELQEALGPGPGPTSDDGCSRAQLLEELRRLKDMHKSK.

Polar residues predominate over residues 32–42 (KASQNRTRALQ). Residues 32 to 56 (KASQNRTRALQSHSSPECKEEPEPL) are disordered. Phosphoserine is present on Val121. 7 residues coordinate Zn(2+): His172, His174, Asp176, His177, His229, Asp253, and His291.

Belongs to the metallo-beta-lactamase superfamily. Glyoxalase II family. Isoform 2 interacts with the sarcomeric proteins, MRLC2, MYOM1 and ENO3. Zn(2+) serves as cofactor. Post-translationally, undergoes cleavage at the N-terminus. Expressed in many discrete areas of the brain.

It is found in the cell membrane. The protein localises to the mitochondrion. Its subcellular location is the cytoplasm. The enzyme catalyses a thioester + H2O = a thiol + a carboxylate + H(+). In terms of biological role, probable thioesterase that may play a role in cellular detoxification processes; it likely acts on a yet-unknown alpha-hydroxythioester substrate. In vitro, it is able to catalyze the hydrolysis of S-D-lactoyl-glutathione to form glutathione and D-lactic acid at very low rate, though this reaction is not physiologically relevant in vivo. This Mus musculus (Mouse) protein is Probable thioesterase PNKD (Pnkd).